Consider the following 354-residue polypeptide: S-adenosylmethionine:tRNA ribosyltransferase-isomerase (354 aa).

Belongs to the QueA family. In terms of assembly, monomer.

Its subcellular location is the cytoplasm. It catalyses the reaction 7-aminomethyl-7-carbaguanosine(34) in tRNA + S-adenosyl-L-methionine = epoxyqueuosine(34) in tRNA + adenine + L-methionine + 2 H(+). Its pathway is tRNA modification; tRNA-queuosine biosynthesis. In terms of biological role, transfers and isomerizes the ribose moiety from AdoMet to the 7-aminomethyl group of 7-deazaguanine (preQ1-tRNA) to give epoxyqueuosine (oQ-tRNA). This chain is S-adenosylmethionine:tRNA ribosyltransferase-isomerase, found in Salmonella gallinarum (strain 287/91 / NCTC 13346).